A 434-amino-acid polypeptide reads, in one-letter code: Enolase (434 aa).

2 residues coordinate substrate: histidine 158 and glutamate 167. Residue glutamate 210 is the Proton donor of the active site. The Mg(2+) site is built by aspartate 245, glutamate 294, and aspartate 319. The substrate site is built by glutamate 294 and aspartate 319. Lysine 344 acts as the Proton acceptor in catalysis. Substrate-binding positions include serine 371–serine 374 and lysine 395.

The protein belongs to the enolase family. Homodimer. Mg(2+) serves as cofactor.

Its subcellular location is the cytoplasm. It catalyses the reaction (2R)-2-phosphoglycerate = phosphoenolpyruvate + H2O. The protein operates within carbohydrate degradation; glycolysis; pyruvate from D-glyceraldehyde 3-phosphate: step 4/5. This Schistosoma mansoni (Blood fluke) protein is Enolase (ENO).